A 242-amino-acid chain; its full sequence is Uridylate kinase (242 aa).

12–15 (KLSG) contributes to the ATP binding site. Residues 20–25 (GNDGFG) form an involved in allosteric activation by GTP region. Position 54 (glycine 54) interacts with UMP. 2 residues coordinate ATP: glycine 55 and arginine 59. UMP is bound by residues aspartate 74 and 135-142 (TGNPYFST). Residues asparagine 163, tyrosine 169, and aspartate 172 each contribute to the ATP site.

It belongs to the UMP kinase family. In terms of assembly, homohexamer.

It localises to the cytoplasm. It catalyses the reaction UMP + ATP = UDP + ADP. Its pathway is pyrimidine metabolism; CTP biosynthesis via de novo pathway; UDP from UMP (UMPK route): step 1/1. Allosterically activated by GTP. Inhibited by UTP. Functionally, catalyzes the reversible phosphorylation of UMP to UDP. In Listeria innocua serovar 6a (strain ATCC BAA-680 / CLIP 11262), this protein is Uridylate kinase.